The primary structure comprises 548 residues: Chaperonin GroEL (548 aa).

Residues 29-32, Lys50, 86-90, Gly414, 478-480, and Asp494 each bind ATP; these read TMGP, DGTTT, and NAA.

It belongs to the chaperonin (HSP60) family. Forms a cylinder of 14 subunits composed of two heptameric rings stacked back-to-back. Interacts with the co-chaperonin GroES.

The protein resides in the cytoplasm. It carries out the reaction ATP + H2O + a folded polypeptide = ADP + phosphate + an unfolded polypeptide.. Functionally, together with its co-chaperonin GroES, plays an essential role in assisting protein folding. The GroEL-GroES system forms a nano-cage that allows encapsulation of the non-native substrate proteins and provides a physical environment optimized to promote and accelerate protein folding. May play a protective role against the defense mechanisms generated by the infected macrophages. The protein is Chaperonin GroEL of Legionella pneumophila subsp. pneumophila (strain Philadelphia 1 / ATCC 33152 / DSM 7513).